A 397-amino-acid polypeptide reads, in one-letter code: Odorant receptor 22a (397 aa).

At 1 to 49 the chain is on the cytoplasmic side; that stretch reads MLSKFFPHIKEKPLSERVKSRDAFIYLDRVMWSFGWTEPENKRWILPYK. The chain crosses the membrane as a helical span at residues 50-70; sequence LWLAFVNIVMLILLPISISIE. Over 71-86 the chain is Extracellular; it reads YLHRFKTFSAGEFLSS. A helical membrane pass occupies residues 87 to 107; that stretch reads LEIGVNMYGSSFKCAFTLIGF. Residues 108–136 are Cytoplasmic-facing; the sequence is KKRQEAKVLLDQLDKRCLSDKERSTVHRY. A helical transmembrane segment spans residues 137 to 157; the sequence is VAMGNFFDILYHIFYSTFVVM. The Extracellular portion of the chain corresponds to 158–182; sequence NFPYFLLERRHAWRMYFPYIDSDEQ. Residues 183 to 203 form a helical membrane-spanning segment; it reads FYISSIAECFLMTEAIYMDLC. At 204 to 263 the chain is on the cytoplasmic side; it reads TDVCPLISMLMARCHISLLKQRLRNLRSKPGRTEDEYLEELTECIRDHRLLLDYVDALRP. Residues 264–280 traverse the membrane as a helical segment; sequence VFSGTIFVQFLLIGTVL. Over 281–286 the chain is Extracellular; the sequence is GLSMIN. A helical membrane pass occupies residues 287–304; that stretch reads LMFFSTFWTGVATCLFMF. Residues 305–356 are Cytoplasmic-facing; it reads DVSMETFPFCYLCNMIIDDCQEMSNCLFQSDWTSADRRYKSTLVYFLHNLQQ. Residues 357–377 traverse the membrane as a helical segment; that stretch reads PITLTAGGVFPISMQTNLAMV. Residues 378–397 are Extracellular-facing; sequence KLAFSVVTVIKQFNLAERFQ.

This sequence belongs to the insect chemoreceptor superfamily. Heteromeric odorant receptor channel (TC 1.A.69) family. Or2a subfamily. In terms of assembly, interacts with Orco, via conserved C-terminal cytoplasmic loops. Complexes exist early in the endomembrane system in olfactory sensory neurons (OSNs), coupling these complexes to the conserved ciliary trafficking pathway. Interacts with snmp1. Expressed with Orco in 17-20 sensory neurons on the medial-proximal edge of the antenna. Expressed in the ab3A neuron which responds to ethyl butyrate.

Its subcellular location is the cell membrane. In terms of biological role, odorant receptor which mediates acceptance or avoidance behavior, depending on its substrates. The odorant receptor repertoire encodes a large collection of odor stimuli that vary widely in identity, intensity, and duration. Involved in the behavioral responses ethyl butyrate and to esters in more general. Complexes with Orco to form odorant-sensing units, providing sensitive and prolonged odorant signaling and calcium permeability. They are necessary and sufficient to promote functional reconstitution of odor-evoked signaling in sensory neurons that normally respond only to carbon dioxide. This chain is Odorant receptor 22a (Or22a), found in Drosophila melanogaster (Fruit fly).